We begin with the raw amino-acid sequence, 20 residues long: Protein PR-L3 (20 aa).

This sequence belongs to the BetVI family.

In Lupinus luteus (European yellow lupine), this protein is Protein PR-L3.